The primary structure comprises 387 residues: Transcription termination/antitermination protein NusA (387 aa).

Positions 145–209 (GQVLTGVVTR…AKGPSLLVSR (65 aa)) constitute an S1 motif domain. One can recognise a KH domain in the interval 312–379 (AKKARVKVTK…ARERKAREEF (68 aa)).

This sequence belongs to the NusA family. Monomer. Binds directly to the core enzyme of the DNA-dependent RNA polymerase and to nascent RNA.

It localises to the cytoplasm. In terms of biological role, participates in both transcription termination and antitermination. The protein is Transcription termination/antitermination protein NusA of Thermus thermophilus (strain ATCC 27634 / DSM 579 / HB8).